The chain runs to 637 residues: Acyl-CoA ligase cm3C (637 aa).

ATP contacts are provided by residues 282-290 (TSGTSGRQK), 423-428 (HAWGLT), D507, R526, and K624. An SBD1 region spans residues 353 to 423 (DMQRMLGSVA…SLQPSWEFLH (71 aa)). The SBD2 stretch occupies residues 424–486 (AWGLTETCIV…YKAPNMFVGY (63 aa)).

It belongs to the ATP-dependent AMP-binding enzyme family.

It participates in secondary metabolite biosynthesis. Its function is as follows. Acyl-CoA ligase; part of the gene cluster that mediates the biosynthesis of beauveriolides I and III, cyclodepsipeptides acting as inhibitors of the acyl-CoA:cholesterol acyltransferase. The HR-PKS cm3B initiates the biosynthesis of beauveriolides by iteratively catalyzing the formation of the linear polyketide chain. The ATP-dependent acetyl-CoA ligase cm3D converts the polyketide carboxylic acid to a CoA thioester which id shuttled to the first T domain in the NRPS cm3A by the acetyltransferase cm3C. Cm3A contains 13 domains and assembles the polyketide chain, L-phenylalanine, L-alanine, and D-leucine (or D-allo-isoleucine) to form beauveriolide I (or beauveriolide III). The production of both beauveriolides I and III suggests the substrate adaptability of cm3B, using different amino acids as substrates. This chain is Acyl-CoA ligase cm3C, found in Cordyceps militaris (strain CM01) (Caterpillar fungus).